Reading from the N-terminus, the 130-residue chain is Large ribosomal subunit protein bL20 (130 aa).

The protein belongs to the bacterial ribosomal protein bL20 family.

Its function is as follows. Binds directly to 23S ribosomal RNA and is necessary for the in vitro assembly process of the 50S ribosomal subunit. It is not involved in the protein synthesizing functions of that subunit. The chain is Large ribosomal subunit protein bL20 from Solibacter usitatus (strain Ellin6076).